A 202-amino-acid chain; its full sequence is MKVYSIGLFKVVPGNKPVLLNIVYELSSFGFFQRGSVKEVSLFVSRETVGRTNVGERVSMEHTQTQKVCHTTVDSKGLGCSVLTDSEYPGRVAHTLIRICLEEFYKVHPESEWRGLQSDVELQTPALDQLLLKYQNPETADPMMNLQKNLDETITIVKKTVEQLGQRGEKLDDLAAKSDDLSFQSKAFMNNAERMNKCCGYV.

In terms of domain architecture, Longin spans 7-129 (GLFKVVPGNK…VELQTPALDQ (123 aa)). Positions 142–202 (PMMNLQKNLD…ERMNKCCGYV (61 aa)) constitute a v-SNARE coiled-coil homology domain. Cys-198 is lipidated: S-palmitoyl cysteine. Cys-199 is modified (cysteine methyl ester). The S-farnesyl cysteine moiety is linked to residue Cys-199. Residues 200–202 (GYV) constitute a propeptide, removed in mature form.

This sequence belongs to the synaptobrevin family. In terms of assembly, may be found in 2 different SNARE complexes.

The protein localises to the cytoplasm. The protein resides in the cytosol. It is found in the cytoplasmic vesicle membrane. Its subcellular location is the golgi apparatus membrane. It localises to the cytoplasmic vesicle. The protein localises to the phagosome membrane. The protein resides in the endosome membrane. In terms of biological role, vesicular soluble NSF attachment protein receptor (v-SNARE) mediating vesicle docking and fusion to a specific acceptor cellular compartment. Functions in endoplasmic reticulum to Golgi transport and in early/recycling endosome to TGN transport as part of a SNARE complex. Has a S-palmitoyl transferase activity. In Dictyostelium discoideum (Social amoeba), this protein is Putative synaptobrevin homolog YKT6 (ykt6).